The chain runs to 478 residues: Argininosuccinate lyase (478 aa).

Belongs to the lyase 1 family. Argininosuccinate lyase subfamily.

It is found in the cytoplasm. The enzyme catalyses 2-(N(omega)-L-arginino)succinate = fumarate + L-arginine. It functions in the pathway amino-acid biosynthesis; L-arginine biosynthesis; L-arginine from L-ornithine and carbamoyl phosphate: step 3/3. In Rhodospirillum rubrum (strain ATCC 11170 / ATH 1.1.1 / DSM 467 / LMG 4362 / NCIMB 8255 / S1), this protein is Argininosuccinate lyase.